Here is a 402-residue protein sequence, read N- to C-terminus: Plasminogen activator inhibitor 1 (402 aa).

The signal sequence occupies residues 1-23 (MQMSPALTCLVLGLALVFGEGSA). N-linked (GlcNAc...) asparagine glycosylation is found at Asn232, Asn288, and Asn352.

The protein belongs to the serpin family. As to quaternary structure, forms a heterodimer with TMPRSS7. Interacts with VTN. Binds LRP1B; binding is followed by internalization and degradation. Interacts with PPP1CB. In complex with PLAU/uPA, interacts with PLAUR/uPAR. Interacts with SORL1 and LRP1, either alone or in complex with PLAU; these interactions are abolished in the presence of LRPAP1/RAP. The ternary complex composed of PLAUR-PLAU-PAI1 also interacts with SORL1. Interacts with PLAT/tPA. Also interacts with SORL1, when complexed to PLAT/tPA. In terms of processing, inactivated by proteolytic attack of the urokinase-type (u-PA) and the tissue-type (TPA), cleaving the 369-Arg-|-Met-370 bond. In terms of tissue distribution, expressed in endothelial cells. Found in plasma, platelets, and hepatoma and fibrosarcoma cells.

It localises to the secreted. Functionally, serine protease inhibitor. Inhibits TMPRSS7. Is a primary inhibitor of tissue-type plasminogen activator (PLAT) and urokinase-type plasminogen activator (PLAU). As PLAT inhibitor, it is required for fibrinolysis down-regulation and is responsible for the controlled degradation of blood clots. As PLAU inhibitor, it is involved in the regulation of cell adhesion and spreading. Acts as a regulator of cell migration, independently of its role as protease inhibitor. It is required for stimulation of keratinocyte migration during cutaneous injury repair. It is involved in cellular and replicative senescence. Plays a role in alveolar type 2 cells senescence in the lung. Is involved in the regulation of cementogenic differentiation of periodontal ligament stem cells, and regulates odontoblast differentiation and dentin formation during odontogenesis. The protein is Plasminogen activator inhibitor 1 (SERPINE1) of Homo sapiens (Human).